The primary structure comprises 382 residues: Lipid-A-disaccharide synthase (382 aa).

It belongs to the LpxB family.

The catalysed reaction is 2-N,3-O-bis[(3R)-3-hydroxytetradecanoyl]-alpha-D-glucosaminyl 1-phosphate + UDP-2-N,3-O-bis[(3R)-3-hydroxytetradecanoyl]-alpha-D-glucosamine = lipid A disaccharide (E. coli) + UDP + H(+). The enzyme catalyses a lipid X + a UDP-2-N,3-O-bis[(3R)-3-hydroxyacyl]-alpha-D-glucosamine = a lipid A disaccharide + UDP + H(+). It functions in the pathway glycolipid biosynthesis; lipid IV(A) biosynthesis; lipid IV(A) from (3R)-3-hydroxytetradecanoyl-[acyl-carrier-protein] and UDP-N-acetyl-alpha-D-glucosamine: step 5/6. Condensation of UDP-2,3-diacylglucosamine and 2,3-diacylglucosamine-1-phosphate to form lipid A disaccharide, a precursor of lipid A, a phosphorylated glycolipid that anchors the lipopolysaccharide to the outer membrane of the cell. The sequence is that of Lipid-A-disaccharide synthase from Salmonella typhimurium (strain LT2 / SGSC1412 / ATCC 700720).